Consider the following 317-residue polypeptide: Fe-S cluster assembly protein dre2 (317 aa).

An N-terminal SAM-like domain region spans residues 22–152; that stretch reads PVQAKRTLLL…KPNFEPSAAV (131 aa). The linker stretch occupies residues 153–209; sequence PLKFGLKKKNKPTPTAVPSIPTGFAAPMGIDSPVTNHDRDEDDELINEDTLLSEEDL. [2Fe-2S] cluster contacts are provided by cysteine 219, cysteine 230, cysteine 233, and cysteine 235. Residues 219-235 form a fe-S binding site A region; sequence CQPKTGRRRRACKDCTC. The [4Fe-4S] cluster site is built by cysteine 280, cysteine 283, cysteine 291, and cysteine 294. 2 consecutive short sequence motifs (cx2C motif) follow at residues 280–283 and 291–294; these read CGSC and CDGC. Positions 280 to 294 are fe-S binding site B; the sequence is CGSCALGDAFRCDGC.

It belongs to the anamorsin family. Monomer. Interacts with tah18. Interacts with mia40. Requires [2Fe-2S] cluster as cofactor. [4Fe-4S] cluster is required as a cofactor.

It localises to the cytoplasm. It is found in the mitochondrion intermembrane space. In terms of biological role, component of the cytosolic iron-sulfur (Fe-S) protein assembly (CIA) machinery required for the maturation of extramitochondrial Fe-S proteins. Part of an electron transfer chain functioning in an early step of cytosolic Fe-S biogenesis, facilitating the de novo assembly of a [4Fe-4S] cluster on the scaffold complex cfd1-nbp35. Electrons are transferred to dre2 from NADPH via the FAD- and FMN-containing protein tah18. Tah18-dre2 are also required for the assembly of the diferric tyrosyl radical cofactor of ribonucleotide reductase (RNR), probably by providing electrons for reduction during radical cofactor maturation in the catalytic small subunit rnr2. In Penicillium rubens (strain ATCC 28089 / DSM 1075 / NRRL 1951 / Wisconsin 54-1255) (Penicillium chrysogenum), this protein is Fe-S cluster assembly protein dre2.